The following is a 520-amino-acid chain: Bifunctional purine biosynthesis protein PurH (520 aa).

The 146-residue stretch at Met1–Thr146 folds into the MGS-like domain.

This sequence belongs to the PurH family.

It carries out the reaction (6R)-10-formyltetrahydrofolate + 5-amino-1-(5-phospho-beta-D-ribosyl)imidazole-4-carboxamide = 5-formamido-1-(5-phospho-D-ribosyl)imidazole-4-carboxamide + (6S)-5,6,7,8-tetrahydrofolate. The catalysed reaction is IMP + H2O = 5-formamido-1-(5-phospho-D-ribosyl)imidazole-4-carboxamide. The protein operates within purine metabolism; IMP biosynthesis via de novo pathway; 5-formamido-1-(5-phospho-D-ribosyl)imidazole-4-carboxamide from 5-amino-1-(5-phospho-D-ribosyl)imidazole-4-carboxamide (10-formyl THF route): step 1/1. It functions in the pathway purine metabolism; IMP biosynthesis via de novo pathway; IMP from 5-formamido-1-(5-phospho-D-ribosyl)imidazole-4-carboxamide: step 1/1. The polypeptide is Bifunctional purine biosynthesis protein PurH (Synechococcus sp. (strain CC9902)).